Here is a 343-residue protein sequence, read N- to C-terminus: NAC domain-containing protein 4 (343 aa).

The NAC domain maps to 12-168; it reads LPPGFRFHPT…EWVLCRVFKK (157 aa). A DNA-binding region spans residues 109–174; the sequence is VGMKKTLVFY…VFKKSLVEVG (66 aa). Residues 304 to 333 form a disordered region; that stretch reads GGERERLSASQDTGLTSDVNPEISSSSGQK. Residues 311–332 are compositionally biased toward polar residues; the sequence is SASQDTGLTSDVNPEISSSSGQ.

In terms of tissue distribution, expressed in roots, tiller buds, stems, leaves, lamina joints and the young husks. Expressed in embryos, coleoptiles, radicles, leaf pulvinus, ligules, panicles, palea and lemma, anthers, and the internode of the peduncles. Expressed in young leaves, root meristems, florescence meristems and young spikelets.

The protein localises to the nucleus. Its function is as follows. Transcription factor involved in the regulation of tiller bud outgrowth, but does not seem to regulate tiller bud initiation. Possesses transactivation activity in yeast. Involved in the regulation of plant architecture and grain yield. Acts as a negative regulator of plant height and flowering time. Regulates directly key genes of the gibberellin (GA) pathway by binding to their promoters. Positively regulates leaf senescence in an age-dependent manner. Activates directly the expression of the chlorophyll degradation genes SGR and NYC3. Positively regulates the level of abscisic acid (ABA) by directly up-regulating the expression of the ABA biosynthetic genes NCED3 and ZEP, and down-regulating the ABA catabolic gene CYP707A5/ABA8OX1. Promotes salt-induced cell death accompanied by the loss of plasma membrane integrity, nuclear DNA fragmentation, and changes of caspase-like activity. Targets genes that encoded a reactive oxygen species (ROS) scavenger COX11 and a caspase-like protease AP37. Activates the potassium efflux channels GORK and SKOR. Acts as a positive regulator of drought and salt tolerance through ABA-mediated pathways. Acts as a negative regulator of root growth. Functions as an upstream integrator of auxin and cytokinin signals that affect CROWN ROOTLESS (CRL) and cyclin-dependent protein kinase (CDK) genes to regulate cell division during root development. Binds directly to the promoters of the auxin inactivation-related genes GH3.6 and GH3.8, the auxin signaling-related gene ARF25, and the cytokinin oxidase gene CKX4. Activates directly the expressions of the 1-aminocyclopropane-1-carboxylate oxidase genes ACO1 and ACO3, enhancing ethylene synthesis, and then retarding seedling establishment. This is NAC domain-containing protein 4 from Oryza sativa subsp. japonica (Rice).